The chain runs to 33 residues: Beta-amanitin proprotein (33 aa).

The propeptide occupies 1 to 10; the sequence is MSDINATRLP. A cross-link (cyclopeptide (Ile-Pro)) is located at residues 11–18; the sequence is IWGIGCDP. Positions 12-16 form a cross-link, 2'-cysteinyl-6'-hydroxytryptophan sulfoxide (Trp-Cys); that stretch reads WGIGC. The propeptide occupies 19 to 33; the sequence is CVGDEVTALLTRGEA.

This sequence belongs to the MSDIN fungal toxin family. Processed by the macrocyclase-peptidase enzyme POPB to yield a toxic cyclic decapeptide. POPB first removes 10 residues from the N-terminus. Conformational trapping of the remaining peptide forces the enzyme to release this intermediate rather than proceed to macrocyclization. The enzyme rebinds the remaining peptide in a different conformation and catalyzes macrocyclization of the N-terminal 8 residues.

In terms of biological role, toxin belonging to the bicyclic octapeptides amatoxins that acts by binding non-competitively to RNA polymerase II and greatly slowing the elongation of transcripts from target promoters. The sequence is that of Beta-amanitin proprotein from Amanita fuligineoides.